The following is a 431-amino-acid chain: Glutamate-1-semialdehyde 2,1-aminomutase (431 aa).

At Lys270 the chain carries N6-(pyridoxal phosphate)lysine.

Belongs to the class-III pyridoxal-phosphate-dependent aminotransferase family. HemL subfamily. Homodimer. Pyridoxal 5'-phosphate serves as cofactor.

It is found in the cytoplasm. The catalysed reaction is (S)-4-amino-5-oxopentanoate = 5-aminolevulinate. The protein operates within porphyrin-containing compound metabolism; protoporphyrin-IX biosynthesis; 5-aminolevulinate from L-glutamyl-tRNA(Glu): step 2/2. This Limosilactobacillus reuteri subsp. reuteri (strain JCM 1112) (Lactobacillus reuteri) protein is Glutamate-1-semialdehyde 2,1-aminomutase.